A 302-amino-acid chain; its full sequence is HPr kinase/phosphorylase (302 aa).

Active-site residues include His-136 and Lys-157. Gly-151–Ser-158 lines the ATP pocket. Residue Ser-158 coordinates Mg(2+). Asp-175 acts as the Proton acceptor; for phosphorylation activity. Proton donor; for dephosphorylation activity in catalysis. Residues Leu-198–Asp-207 form an important for the catalytic mechanism of both phosphorylation and dephosphorylation region. Glu-199 contributes to the Mg(2+) binding site. The active site involves Arg-240. The interval Pro-261 to Arg-266 is important for the catalytic mechanism of dephosphorylation.

This sequence belongs to the HPrK/P family. In terms of assembly, homohexamer. Mg(2+) is required as a cofactor.

The enzyme catalyses [HPr protein]-L-serine + ATP = [HPr protein]-O-phospho-L-serine + ADP + H(+). It catalyses the reaction [HPr protein]-O-phospho-L-serine + phosphate + H(+) = [HPr protein]-L-serine + diphosphate. Catalyzes the ATP- as well as the pyrophosphate-dependent phosphorylation of a specific serine residue in HPr, a phosphocarrier protein of the phosphoenolpyruvate-dependent sugar phosphotransferase system (PTS). HprK/P also catalyzes the pyrophosphate-producing, inorganic phosphate-dependent dephosphorylation (phosphorolysis) of seryl-phosphorylated HPr (P-Ser-HPr). The two antagonistic activities of HprK/P are regulated by several intracellular metabolites, which change their concentration in response to the absence or presence of rapidly metabolisable carbon sources (glucose, fructose, etc.) in the growth medium. Therefore, by controlling the phosphorylation state of HPr, HPrK/P is a sensor enzyme that plays a major role in the regulation of carbon metabolism and sugar transport: it mediates carbon catabolite repression (CCR), and regulates PTS-catalyzed carbohydrate uptake and inducer exclusion. The sequence is that of HPr kinase/phosphorylase from Clostridium beijerinckii (strain ATCC 51743 / NCIMB 8052) (Clostridium acetobutylicum).